A 185-amino-acid chain; its full sequence is Ribosome-recycling factor (185 aa).

The protein belongs to the RRF family.

It localises to the cytoplasm. Functionally, responsible for the release of ribosomes from messenger RNA at the termination of protein biosynthesis. May increase the efficiency of translation by recycling ribosomes from one round of translation to another. The protein is Ribosome-recycling factor of Salinispora tropica (strain ATCC BAA-916 / DSM 44818 / JCM 13857 / NBRC 105044 / CNB-440).